A 207-amino-acid chain; its full sequence is Cytochrome c biogenesis ATP-binding export protein CcmA (207 aa).

Residues 4–207 enclose the ABC transporter domain; it reads LEARELLCER…RISLTQTRAA (204 aa). 36-43 provides a ligand contact to ATP; sequence GSNGAGKT.

This sequence belongs to the ABC transporter superfamily. CcmA exporter (TC 3.A.1.107) family. The complex is composed of two ATP-binding proteins (CcmA) and two transmembrane proteins (CcmB).

It is found in the cell inner membrane. The catalysed reaction is heme b(in) + ATP + H2O = heme b(out) + ADP + phosphate + H(+). In terms of biological role, part of the ABC transporter complex CcmAB involved in the biogenesis of c-type cytochromes; once thought to export heme, this seems not to be the case, but its exact role is uncertain. Responsible for energy coupling to the transport system. In Shigella flexneri, this protein is Cytochrome c biogenesis ATP-binding export protein CcmA.